Reading from the N-terminus, the 834-residue chain is 5-hydroxytryptamine receptor 2A (834 aa).

Topologically, residues Met-1 to Ser-230 are extracellular. Residues Thr-56–Ser-75 are disordered. 8 N-linked (GlcNAc...) asparagine glycosylation sites follow: Asn-68, Asn-97, Asn-161, Asn-175, Asn-183, Asn-194, Asn-203, and Asn-209. A helical transmembrane segment spans residues Val-231–Leu-253. Residues Glu-254 to Tyr-263 lie on the Cytoplasmic side of the membrane. The chain crosses the membrane as a helical span at residues Leu-264–Val-285. The Extracellular portion of the chain corresponds to Tyr-286 to Asp-300. Cys-299 and Cys-378 are joined by a disulfide. Residues Ile-301 to Val-322 form a helical membrane-spanning segment. Residues Asp-323–Arg-341 lie on the Cytoplasmic side of the membrane. The helical transmembrane segment at Val-342–Trp-364 threads the bilayer. The Extracellular segment spans residues Lys-365–Thr-391. Residues Cys-392–Ala-413 traverse the membrane as a helical segment. The Cytoplasmic segment spans residues Arg-414–Thr-752. Disordered regions lie at residues Arg-420–Thr-442, Lys-460–Gly-516, Gln-531–Gln-599, Leu-617–Ala-640, and Ser-674–Ala-743. 2 stretches are compositionally biased toward polar residues: residues Gly-482–Asp-502 and Gln-532–Ala-542. The segment covering Arg-551 to Gln-564 has biased composition (basic and acidic residues). Acidic residues predominate over residues Glu-565–Glu-575. Low complexity predominate over residues Thr-582–Thr-593. Positions Ser-674 to Ser-694 are enriched in polar residues. Residues Gln-702–Gln-723 are compositionally biased toward low complexity. Residues Leu-753–Leu-776 form a helical membrane-spanning segment. The Extracellular segment spans residues Cys-777–Ser-785. The helical transmembrane segment at Val-786–Phe-808 threads the bilayer. Over Ser-809 to Leu-834 the chain is Cytoplasmic.

Belongs to the G-protein coupled receptor 1 family.

The protein resides in the cell membrane. Its function is as follows. This is one of the several different receptors for 5-hydroxytryptamine (serotonin), a biogenic hormone that functions as a neurotransmitter, a hormone, and a mitogen. The activity of this receptor is mediated by G proteins which inhibit adenylate cyclase. The chain is 5-hydroxytryptamine receptor 2A (5-HT1A) from Drosophila melanogaster (Fruit fly).